The sequence spans 201 residues: tRNA (guanine-N(7)-)-methyltransferase (201 aa).

S-adenosyl-L-methionine contacts are provided by E33, E58, D85, and D106. D106 is a catalytic residue. Residues K110, D142, and 180-183 contribute to the substrate site; that span reads TTYE.

This sequence belongs to the class I-like SAM-binding methyltransferase superfamily. TrmB family.

The catalysed reaction is guanosine(46) in tRNA + S-adenosyl-L-methionine = N(7)-methylguanosine(46) in tRNA + S-adenosyl-L-homocysteine. It participates in tRNA modification; N(7)-methylguanine-tRNA biosynthesis. Catalyzes the formation of N(7)-methylguanine at position 46 (m7G46) in tRNA. This is tRNA (guanine-N(7)-)-methyltransferase from Mesomycoplasma hyopneumoniae (strain J / ATCC 25934 / NCTC 10110) (Mycoplasma hyopneumoniae).